Here is a 1333-residue protein sequence, read N- to C-terminus: MSSANYISDEVPPDMVSPHDHRPSKDEPLKHLDTVIALYDFPGTQSSHLPLNLGDTIHVLSKSATGWWDGVVMGNSGELQRGWFPHNYVRSVNYVQPVLKKLKDNKDLDSITAANTAANVVMPSLTNLIQKSLQESERNSPANSTRKNSVVSFASSETSMPSDSKYTQQQTNTNQNSPEYQSISLPSTRDHSTVEMQLPSQQSSISHTLTGFGIGDDEIIPMEVEEAEKLVEEYRLKYNKTVTWIPRTSTKGDIIFYCEQLDVYCESLPLILFDGEASSPNLEYPGSDVIMDPTPISVQGSQSMENVLDTREGSAAGSFDSTKRDSNVSMSTQSSGSSYHRFSRPFFSVDNLFYKHSSDIGTWNELKEQCNYILDLMLKAIKDQNRQFFSTHFSRLNKLVVALCAAVRLNQEDYIDTKYENTTRRKLKRVCASFAQIYINGILHLSVLHYSLEGFNEGRLFGYDMGKLNRSSSSSAFQSPASSLSTIRQGSDDSTRFAQKLSQDRNSEGNGDMNYINQLVYEIDNLRENVNSIVKIFLKLSANKKIKNSDYDSSDASDDEGEDRFDILPQVYPRFLVDEFNGGNWCNPFFSTKNTVLNVSGDDLKNRYHTKIIIDHSAYDSLSQYVDKIVDACENILEALDPKVQNTFYYNEMLRNERNTQILRLTYKSLYHCSAMVDLIESFDFTVFCSVKRHTGNAIDTEDESYENPSVWGDHYDSNLSFDYPVVLEFFRLKQELHDLVAKIIMATQSLTLEDPEVFKGLKEEDPLFYNREISKIPKEKAALLLSSILKEQLSFKDGGAISLNPDTLLSGYLVEIAKTTKTVLLITQQLIEERETIINYATRVMQDNFDVQLLLVERNNTSSSEKADDNSYYVGGHKKSTDVPWYLEGDDEYELLLDVKGNIKGGSKEALVSHLTHHLSLDSNFNAVFLLMFSSMMSLGELISLLIARFNIEPPEGLSYEEYNLWVSKKRNPIRLRVINIMKLLLEKNWSMSYYNEPVLRRWLTFAHSDQVQTYSLGNLLVNYLERLLRGERIYVERDPVIPNTKPPAPLTKGSSLSKKPRVMDIDYVELARQLTLREFKLYCKITKFACLAKVWGKKSGLSESIDSITQFIKASNQLTNFVGYMILRKADPKKRVQIIRYFIQVADKCRQYNNFSSMTAIISALYSSPIHRLKKTWEYMNADALSNLKNMNKLMNSSRNFNEYRDVLKFIGSEPCVPFFGVYLSDLTFVYHGNPDYLYNRTRQVNFAKRAKTSEIVSGIDRFKTTGYNFQEVPEIQKFLDAWFEKCPTIDEQYQISLNLEPREQAVGASNSNSTTNATTNIKSFKPFSLK.

Residues 1–27 are disordered; that stretch reads MSSANYISDEVPPDMVSPHDHRPSKDE. The span at 17–27 shows a compositional bias: basic and acidic residues; sequence SPHDHRPSKDE. In terms of domain architecture, SH3 spans 30-94; sequence KHLDTVIALY…PHNYVRSVNY (65 aa). Residues 133–166 show a composition bias toward polar residues; the sequence is LQESERNSPANSTRKNSVVSFASSETSMPSDSKY. Disordered stretches follow at residues 133 to 206 and 474 to 497; these read LQES…SSIS and SSAF…STRF. Residues 167–176 are compositionally biased toward low complexity; sequence TQQQTNTNQN. Composition is skewed to polar residues over residues 177–187 and 194–206; these read SPEYQSISLPS and VEMQ…SSIS. Low complexity predominate over residues 474-485; sequence SSAFQSPASSLS. An N-terminal Ras-GEF domain is found at 900 to 1034; that stretch reads VKGNIKGGSK…YLERLLRGER (135 aa). Residues 1068–1305 form the Ras-GEF domain; sequence DYVELARQLT…YQISLNLEPR (238 aa).

Functionally, promotes the exchange of Ras-bound GDP by GTP. This protein positively controls the level of cellular cAMP at start, the stage at which the yeast cell division cycle is triggered. The polypeptide is Cell division control protein 25 (CDC25) (Candida albicans (strain SC5314 / ATCC MYA-2876) (Yeast)).